The primary structure comprises 509 residues: Histidine--tRNA ligase (509 aa).

The protein belongs to the class-II aminoacyl-tRNA synthetase family. As to quaternary structure, homodimer.

It is found in the cytoplasm. It catalyses the reaction tRNA(His) + L-histidine + ATP = L-histidyl-tRNA(His) + AMP + diphosphate + H(+). The sequence is that of Histidine--tRNA ligase from Rhodopseudomonas palustris (strain TIE-1).